Here is a 350-residue protein sequence, read N- to C-terminus: S-adenosylmethionine:tRNA ribosyltransferase-isomerase (350 aa).

Belongs to the QueA family. Monomer.

Its subcellular location is the cytoplasm. It catalyses the reaction 7-aminomethyl-7-carbaguanosine(34) in tRNA + S-adenosyl-L-methionine = epoxyqueuosine(34) in tRNA + adenine + L-methionine + 2 H(+). The protein operates within tRNA modification; tRNA-queuosine biosynthesis. Transfers and isomerizes the ribose moiety from AdoMet to the 7-aminomethyl group of 7-deazaguanine (preQ1-tRNA) to give epoxyqueuosine (oQ-tRNA). The protein is S-adenosylmethionine:tRNA ribosyltransferase-isomerase of Vibrio vulnificus (strain YJ016).